A 271-amino-acid polypeptide reads, in one-letter code: Acetyl-coenzyme A carboxylase carboxyl transferase subunit alpha (271 aa).

A CoA carboxyltransferase C-terminal domain is found at 1–247 (MSRELIRTVD…KKTILEALGE (247 aa)).

This sequence belongs to the AccA family. Acetyl-CoA carboxylase is a heterohexamer composed of biotin carboxyl carrier protein (AccB), biotin carboxylase (AccC) and two subunits each of ACCase subunit alpha (AccA) and ACCase subunit beta (AccD).

Its subcellular location is the cytoplasm. The catalysed reaction is N(6)-carboxybiotinyl-L-lysyl-[protein] + acetyl-CoA = N(6)-biotinyl-L-lysyl-[protein] + malonyl-CoA. The protein operates within lipid metabolism; malonyl-CoA biosynthesis; malonyl-CoA from acetyl-CoA: step 1/1. Functionally, component of the acetyl coenzyme A carboxylase (ACC) complex. First, biotin carboxylase catalyzes the carboxylation of biotin on its carrier protein (BCCP) and then the CO(2) group is transferred by the carboxyltransferase to acetyl-CoA to form malonyl-CoA. The chain is Acetyl-coenzyme A carboxylase carboxyl transferase subunit alpha from Clostridium perfringens (strain SM101 / Type A).